A 618-amino-acid chain; its full sequence is Origin recognition complex subunit 2 (618 aa).

Disordered stretches follow at residues 1–116 (MSAS…AAKD) and 149–274 (NATP…KKSN). At T24 the chain carries Phosphothreonine. Phosphoserine occurs at positions 26 and 30. The span at 49-59 (TSRRSTRRPSP) shows a compositional bias: basic residues. Positions 70-79 (SNGKGQEERI) are enriched in basic and acidic residues. Phosphoserine is present on residues S87, S91, and S92. Acidic residues predominate over residues 94–107 (AEDQEEEESIEESE). 7 positions are modified to phosphothreonine: T151, T154, T157, T160, T167, T170, and T181. The span at 151–161 (TPCTPKTPKTP) shows a compositional bias: low complexity. The segment covering 183–193 (AHVRTRVKKQI) has biased composition (basic residues). Acidic residues predominate over residues 199–208 (DSDEDFSGDE). Over residues 219 to 233 (SSSSSSSDAGNSSDN) the composition is skewed to low complexity. At T258 the chain carries Phosphothreonine. S260 is modified (phosphoserine).

The protein belongs to the ORC2 family. In terms of assembly, ORC is composed of six subunits. Interacts with Mcm10. Interacts with CG9890. Interaction between the TREX-2/AMEX complex and the ORC complex is required for ORC localization to mRNPs, and consequently mRNA export.

It localises to the nucleus. Its subcellular location is the chromosome. The protein resides in the centromere. Component of the origin recognition complex (ORC) that binds origins of replication. DNA-binding is ATP-dependent, however specific DNA sequences that define origins of replication have not been identified so far. ORC is required to assemble the pre-replication complex necessary to initiate DNA replication. As part of the ORC complex, might also have a role in mRNA export. The protein is Origin recognition complex subunit 2 (Orc2) of Drosophila melanogaster (Fruit fly).